The sequence spans 348 residues: Holliday junction branch migration complex subunit RuvB (348 aa).

The tract at residues 4–186 is large ATPase domain (RuvB-L); sequence TDRIISANTA…FGIIQRLEFY (183 aa). ATP contacts are provided by residues Ile25, Arg26, Gly67, Lys70, Thr71, Thr72, 133–135, Arg176, Tyr186, and Arg223; that span reads EDY. Thr71 is a binding site for Mg(2+). The small ATPAse domain (RuvB-S) stretch occupies residues 187–257; the sequence is SIDDLSKIVY…IADKALSMLK (71 aa). Residues 260–348 are head domain (RuvB-H); that stretch reads PVGFDHMDHR…SADQQQTLSI (89 aa). DNA is bound by residues Arg315 and Arg320.

The protein belongs to the RuvB family. As to quaternary structure, homohexamer. Forms an RuvA(8)-RuvB(12)-Holliday junction (HJ) complex. HJ DNA is sandwiched between 2 RuvA tetramers; dsDNA enters through RuvA and exits via RuvB. An RuvB hexamer assembles on each DNA strand where it exits the tetramer. Each RuvB hexamer is contacted by two RuvA subunits (via domain III) on 2 adjacent RuvB subunits; this complex drives branch migration. In the full resolvosome a probable DNA-RuvA(4)-RuvB(12)-RuvC(2) complex forms which resolves the HJ.

It is found in the cytoplasm. The catalysed reaction is ATP + H2O = ADP + phosphate + H(+). In terms of biological role, the RuvA-RuvB-RuvC complex processes Holliday junction (HJ) DNA during genetic recombination and DNA repair, while the RuvA-RuvB complex plays an important role in the rescue of blocked DNA replication forks via replication fork reversal (RFR). RuvA specifically binds to HJ cruciform DNA, conferring on it an open structure. The RuvB hexamer acts as an ATP-dependent pump, pulling dsDNA into and through the RuvAB complex. RuvB forms 2 homohexamers on either side of HJ DNA bound by 1 or 2 RuvA tetramers; 4 subunits per hexamer contact DNA at a time. Coordinated motions by a converter formed by DNA-disengaged RuvB subunits stimulates ATP hydrolysis and nucleotide exchange. Immobilization of the converter enables RuvB to convert the ATP-contained energy into a lever motion, pulling 2 nucleotides of DNA out of the RuvA tetramer per ATP hydrolyzed, thus driving DNA branch migration. The RuvB motors rotate together with the DNA substrate, which together with the progressing nucleotide cycle form the mechanistic basis for DNA recombination by continuous HJ branch migration. Branch migration allows RuvC to scan DNA until it finds its consensus sequence, where it cleaves and resolves cruciform DNA. The chain is Holliday junction branch migration complex subunit RuvB from Francisella tularensis subsp. tularensis (strain FSC 198).